The following is a 266-amino-acid chain: Undecaprenyl-diphosphatase 1 (266 aa).

8 helical membrane passes run 1–21 (MSII…FLPI), 39–59 (QGLA…VIYF), 83–103 (SKLG…GLLL), 113–133 (SAWV…YADA), 141–161 (IYQL…VAMI), 189–209 (FLLA…ELAL), 218–238 (TLLL…YMFL), and 244–264 (MGML…IVFL).

This sequence belongs to the UppP family.

It localises to the cell inner membrane. It carries out the reaction di-trans,octa-cis-undecaprenyl diphosphate + H2O = di-trans,octa-cis-undecaprenyl phosphate + phosphate + H(+). Its function is as follows. Catalyzes the dephosphorylation of undecaprenyl diphosphate (UPP). Confers resistance to bacitracin. The chain is Undecaprenyl-diphosphatase 1 from Pseudoalteromonas translucida (strain TAC 125).